A 190-amino-acid polypeptide reads, in one-letter code: Selenoprotein S (190 aa).

Residues 28–48 (SLLASYGWYILFSCILLYIVI) form a helical membrane-spanning segment. The VCP/p97-interacting motif (VIM) stretch occupies residues 78-90 (RQEALAAARLRMQ). The interval 115-190 (KIEMWDSMQE…RRGPSSGGUN (76 aa)) is disordered. The segment covering 160-174 (RGGGYNPLTGEGGGT) has biased composition (gly residues). A non-standard amino acid (selenocysteine) is located at residue selenocysteine 189.

This sequence belongs to the selenoprotein S family. Interacts with DERL1 and (via VIM motif) with VCP, suggesting that it forms a membrane complex with DERL1 that serves as a receptor for VCP. Also interacts with DERL2, DERL3 and SELENOK. The SELENOK-SELENOS complex interacts with VCP. Interacts with CCDC47. Truncated SELENOS proteins produced by failed UGA/Sec decoding are ubiquitinated by the CRL2(KLHDC2) and CRL2(KLHDC3) complexes, which recognizes the glycine (Gly) at the C-terminus of truncated SELENOS proteins. Truncated SELENOS proteins produced by failed UGA/Sec decoding are also ubiquitinated by the CRL5(KLHDC1) complex.

It localises to the endoplasmic reticulum membrane. The protein resides in the cytoplasm. Involved in the degradation process of misfolded endoplasmic reticulum (ER) luminal proteins. Participates in the transfer of misfolded proteins from the ER to the cytosol, where they are destroyed by the proteasome in a ubiquitin-dependent manner. Probably acts by serving as a linker between DERL1, which mediates the retrotranslocation of misfolded proteins into the cytosol, and the ATPase complex VCP, which mediates the translocation and ubiquitination. In Mus musculus (Mouse), this protein is Selenoprotein S.